The following is a 341-amino-acid chain: GTP 3',8-cyclase (341 aa).

The Radical SAM core domain maps to 11–231 (KRERPLRDLR…DLINQHMPTE (221 aa)). Residue Arg-20 participates in GTP binding. [4Fe-4S] cluster contacts are provided by Cys-27 and Cys-31. An S-adenosyl-L-methionine-binding site is contributed by Tyr-33. Cys-34 is a [4Fe-4S] cluster binding site. A GTP-binding site is contributed by Arg-75. Gly-79 provides a ligand contact to S-adenosyl-L-methionine. Thr-106 contributes to the GTP binding site. Ser-130 serves as a coordination point for S-adenosyl-L-methionine. Lys-167 serves as a coordination point for GTP. Met-201 serves as a coordination point for S-adenosyl-L-methionine. Residues Cys-265 and Cys-268 each contribute to the [4Fe-4S] cluster site. 270–272 (RAR) serves as a coordination point for GTP. Cys-282 serves as a coordination point for [4Fe-4S] cluster.

This sequence belongs to the radical SAM superfamily. MoaA family. Monomer and homodimer. The cofactor is [4Fe-4S] cluster.

The enzyme catalyses GTP + AH2 + S-adenosyl-L-methionine = (8S)-3',8-cyclo-7,8-dihydroguanosine 5'-triphosphate + 5'-deoxyadenosine + L-methionine + A + H(+). It functions in the pathway cofactor biosynthesis; molybdopterin biosynthesis. Functionally, catalyzes the cyclization of GTP to (8S)-3',8-cyclo-7,8-dihydroguanosine 5'-triphosphate. The protein is GTP 3',8-cyclase of Bacillus velezensis (strain DSM 23117 / BGSC 10A6 / LMG 26770 / FZB42) (Bacillus amyloliquefaciens subsp. plantarum).